Reading from the N-terminus, the 491-residue chain is Ketol-acid reductoisomerase (NADP(+)) (491 aa).

Positions 16-207 (IKKCRFMKEN…GGHRAGVLES (192 aa)) constitute a KARI N-terminal Rossmann domain. NADP(+) contacts are provided by residues 44 to 47 (CGSQ), Lys-67, Ser-77, and 107 to 109 (DKQ). Residue His-131 is part of the active site. Gly-157 serves as a coordination point for NADP(+). 2 KARI C-terminal knotted domains span residues 208 to 344 (SFIA…NILS) and 345 to 484 (YSEK…MKEM). Mg(2+) is bound by residues Asp-216, Glu-220, Glu-389, and Glu-393. Residue Ser-414 coordinates substrate.

This sequence belongs to the ketol-acid reductoisomerase family. Requires Mg(2+) as cofactor.

It catalyses the reaction (2R)-2,3-dihydroxy-3-methylbutanoate + NADP(+) = (2S)-2-acetolactate + NADPH + H(+). The catalysed reaction is (2R,3R)-2,3-dihydroxy-3-methylpentanoate + NADP(+) = (S)-2-ethyl-2-hydroxy-3-oxobutanoate + NADPH + H(+). It functions in the pathway amino-acid biosynthesis; L-isoleucine biosynthesis; L-isoleucine from 2-oxobutanoate: step 2/4. It participates in amino-acid biosynthesis; L-valine biosynthesis; L-valine from pyruvate: step 2/4. In terms of biological role, involved in the biosynthesis of branched-chain amino acids (BCAA). Catalyzes an alkyl-migration followed by a ketol-acid reduction of (S)-2-acetolactate (S2AL) to yield (R)-2,3-dihydroxy-isovalerate. In the isomerase reaction, S2AL is rearranged via a Mg-dependent methyl migration to produce 3-hydroxy-3-methyl-2-ketobutyrate (HMKB). In the reductase reaction, this 2-ketoacid undergoes a metal-dependent reduction by NADPH to yield (R)-2,3-dihydroxy-isovalerate. In Buchnera aphidicola subsp. Schizaphis graminum (strain Sg), this protein is Ketol-acid reductoisomerase (NADP(+)).